Reading from the N-terminus, the 153-residue chain is Large ribosomal subunit protein uL15 (153 aa).

The interval 21 to 41 is disordered; that stretch reads RGIGSGKGKTGGRGIKGQKSR. Gly residues predominate over residues 23–35; sequence IGSGKGKTGGRGI.

Belongs to the universal ribosomal protein uL15 family. In terms of assembly, part of the 50S ribosomal subunit.

Binds to the 23S rRNA. This Rickettsia massiliae (strain Mtu5) protein is Large ribosomal subunit protein uL15.